Consider the following 128-residue polypeptide: Small ribosomal subunit protein eS8 (128 aa).

This sequence belongs to the eukaryotic ribosomal protein eS8 family. As to quaternary structure, part of the 30S ribosomal subunit.

The protein is Small ribosomal subunit protein eS8 of Methanococcus maripaludis (strain C7 / ATCC BAA-1331).